Reading from the N-terminus, the 124-residue chain is Large ribosomal subunit protein uL18 (124 aa).

The protein belongs to the universal ribosomal protein uL18 family. As to quaternary structure, part of the 50S ribosomal subunit; part of the 5S rRNA/L5/L18/L25 subcomplex. Contacts the 5S and 23S rRNAs.

In terms of biological role, this is one of the proteins that bind and probably mediate the attachment of the 5S RNA into the large ribosomal subunit, where it forms part of the central protuberance. The polypeptide is Large ribosomal subunit protein uL18 (Koribacter versatilis (strain Ellin345)).